The sequence spans 658 residues: Glycogen debranching enzyme (658 aa).

D336 acts as the Nucleophile in catalysis. E371 acts as the Proton donor in catalysis.

It belongs to the glycosyl hydrolase 13 family.

It catalyses the reaction Hydrolysis of (1-&gt;6)-alpha-D-glucosidic linkages to branches with degrees of polymerization of three or four glucose residues in limit dextrin.. The protein operates within glycan degradation; glycogen degradation. Removes maltotriose and maltotetraose chains that are attached by 1,6-alpha-linkage to the limit dextrin main chain, generating a debranched limit dextrin. This Klebsiella pneumoniae (strain 342) protein is Glycogen debranching enzyme.